We begin with the raw amino-acid sequence, 348 residues long: Chaperone protein DnaJ (348 aa).

Residues 3–65 (DLYGILGVDH…EQRQRYDRHV (63 aa)) form the J domain. The CR-type zinc finger occupies 109–191 (GGSQVVKIDS…CYGNGSRSAP (83 aa)). Zn(2+) is bound by residues Cys-122, Cys-125, Cys-139, Cys-142, Cys-165, Cys-168, Cys-179, and Cys-182. 4 CXXCXGXG motif repeats span residues 122 to 129 (CDVCNGTR), 139 to 146 (CFDCNGSG), 165 to 172 (CSKCRGNG), and 179 to 186 (CRRCYGNG).

Belongs to the DnaJ family. In terms of assembly, homodimer. It depends on Zn(2+) as a cofactor.

The protein resides in the cytoplasm. Participates actively in the response to hyperosmotic and heat shock by preventing the aggregation of stress-denatured proteins and by disaggregating proteins, also in an autonomous, DnaK-independent fashion. Unfolded proteins bind initially to DnaJ; upon interaction with the DnaJ-bound protein, DnaK hydrolyzes its bound ATP, resulting in the formation of a stable complex. GrpE releases ADP from DnaK; ATP binding to DnaK triggers the release of the substrate protein, thus completing the reaction cycle. Several rounds of ATP-dependent interactions between DnaJ, DnaK and GrpE are required for fully efficient folding. Also involved, together with DnaK and GrpE, in the DNA replication of plasmids through activation of initiation proteins. The chain is Chaperone protein DnaJ from Tropheryma whipplei (strain TW08/27) (Whipple's bacillus).